The sequence spans 312 residues: Cobalamin biosynthesis protein CobD (312 aa).

4 helical membrane passes run 61–81 (IALLLAPFTLAAWALARLPLL), 83–103 (IIVPVALLYLAVGARSLAQHA), 152–172 (DAVFAALFWFLVLGAPGAVLY), and 292–312 (GMWLWAALSLAAAILIGAIHA).

It belongs to the CobD/CbiB family.

The protein localises to the cell membrane. The protein operates within cofactor biosynthesis; adenosylcobalamin biosynthesis. In terms of biological role, converts cobyric acid to cobinamide by the addition of aminopropanol on the F carboxylic group. The chain is Cobalamin biosynthesis protein CobD from Chromobacterium violaceum (strain ATCC 12472 / DSM 30191 / JCM 1249 / CCUG 213 / NBRC 12614 / NCIMB 9131 / NCTC 9757 / MK).